Reading from the N-terminus, the 551-residue chain is NAD(P)H-quinone oxidoreductase chain 4 (551 aa).

14 consecutive transmembrane segments (helical) span residues 25-45, 56-76, 111-131, 133-153, 157-177, 189-209, 233-253, 264-284, 298-318, 335-355, 356-376, 397-417, 438-458, and 485-505; these read FPWLSLSILFPIVGSLMVPFI, WFALGIALTTFLITVAAYLNG, LILLTSFITTLAVLAAWPVTF, PKLFFFLMLAMDGGQIAVFAV, LLFFLAWELELLPVYLLLAIW, FILYTAGSSLFILLAALAMGF, LLCYAGLLIAFGVKLPIVPLH, TAPVHMLLAGILLKMGGYALM, FAPLLVVLGVVNIIYAALTSF, MGFVLIGIGSFSALGTSGAML, QMISHGLIGASLFFLVGATYD, FALWTVCSLASLALPGMSGFV, IVIDGLAAVGVILTPIYLLSM, and VYIIGCLLVPIIGIGLYPRLM.

Belongs to the complex I subunit 4 family.

Its subcellular location is the cellular thylakoid membrane. It carries out the reaction a plastoquinone + NADH + (n+1) H(+)(in) = a plastoquinol + NAD(+) + n H(+)(out). It catalyses the reaction a plastoquinone + NADPH + (n+1) H(+)(in) = a plastoquinol + NADP(+) + n H(+)(out). Functionally, NDH-1 shuttles electrons from NAD(P)H, via FMN and iron-sulfur (Fe-S) centers, to quinones in the respiratory chain. The immediate electron acceptor for the enzyme in this species is believed to be plastoquinone. Couples the redox reaction to proton translocation (for every two electrons transferred, four hydrogen ions are translocated across the cytoplasmic membrane), and thus conserves the redox energy in a proton gradient. This is NAD(P)H-quinone oxidoreductase chain 4 from Synechococcus sp. (strain WH7803).